Reading from the N-terminus, the 216-residue chain is Glycerol-3-phosphate acyltransferase (216 aa).

Transmembrane regions (helical) follow at residues Leu5–Val25, Ile70–Phe90, Val118–Phe138, Ile140–Gly160, and Val164–Ser184. The span at Pro192–Thr201 shows a compositional bias: basic and acidic residues. A disordered region spans residues Pro192–Thr216. Over residues Ser206–Thr216 the composition is skewed to acidic residues.

The protein belongs to the PlsY family. Probably interacts with PlsX.

The protein resides in the cell inner membrane. The enzyme catalyses an acyl phosphate + sn-glycerol 3-phosphate = a 1-acyl-sn-glycero-3-phosphate + phosphate. The protein operates within lipid metabolism; phospholipid metabolism. Functionally, catalyzes the transfer of an acyl group from acyl-phosphate (acyl-PO(4)) to glycerol-3-phosphate (G3P) to form lysophosphatidic acid (LPA). This enzyme utilizes acyl-phosphate as fatty acyl donor, but not acyl-CoA or acyl-ACP. This Maricaulis maris (strain MCS10) (Caulobacter maris) protein is Glycerol-3-phosphate acyltransferase.